Reading from the N-terminus, the 151-residue chain is FAD synthase (151 aa).

ATP is bound by residues 9–10 (TF), 14–17 (HPGH), aspartate 96, and tyrosine 123.

This sequence belongs to the archaeal FAD synthase family. In terms of assembly, homodimer. The cofactor is a divalent metal cation.

It catalyses the reaction FMN + ATP + H(+) = FAD + diphosphate. The protein operates within cofactor biosynthesis; FAD biosynthesis; FAD from FMN: step 1/1. Its function is as follows. Catalyzes the transfer of the AMP portion of ATP to flavin mononucleotide (FMN) to produce flavin adenine dinucleotide (FAD) coenzyme. The protein is FAD synthase of Methanothermobacter thermautotrophicus (strain ATCC 29096 / DSM 1053 / JCM 10044 / NBRC 100330 / Delta H) (Methanobacterium thermoautotrophicum).